We begin with the raw amino-acid sequence, 626 residues long: Chaperone protein HtpG (626 aa).

The tract at residues 1-341 (METKQFKAES…SEDLSLNISR (341 aa)) is a; substrate-binding. Residues 342-552 (EILQHDRQLK…EGELSIEMEK (211 aa)) form a b region. A disordered region spans residues 490-509 (DLGIEGEEKENTSSSDDKEN). The span at 498-509 (KENTSSSDDKEN) shows a compositional bias: basic and acidic residues. Residues 553–626 (VLNAMPNNQN…FTNNICKIMK (74 aa)) form a c region.

The protein belongs to the heat shock protein 90 family. Homodimer.

The protein localises to the cytoplasm. In terms of biological role, molecular chaperone. Has ATPase activity. The protein is Chaperone protein HtpG of Clostridium botulinum (strain Loch Maree / Type A3).